A 392-amino-acid chain; its full sequence is Heat-inducible transcription repressor HrcA (392 aa).

Belongs to the HrcA family.

Negative regulator of class I heat shock genes (grpE-dnaK-dnaJ and groELS operons). Prevents heat-shock induction of these operons. The protein is Heat-inducible transcription repressor HrcA of Chlamydia trachomatis serovar D (strain ATCC VR-885 / DSM 19411 / UW-3/Cx).